Here is a 257-residue protein sequence, read N- to C-terminus: Diacetyl reductase [(S)-acetoin forming] (257 aa).

An NAD(+)-binding site is contributed by 6 to 30 (IITGSAGGLGKGIAERLANDGFNIV). Serine 139 lines the substrate pocket. Tyrosine 152 serves as the catalytic Proton acceptor. Lysine 156 is an active-site residue.

It belongs to the short-chain dehydrogenases/reductases (SDR) family.

It catalyses the reaction (S)-acetoin + NAD(+) = diacetyl + NADH + H(+). Its function is as follows. Catalyzes the irreversible reduction of 2,3-butanediol to (S)-acetoin in the presence of NADH. This is Diacetyl reductase [(S)-acetoin forming] (butA) from Staphylococcus epidermidis (strain ATCC 35984 / DSM 28319 / BCRC 17069 / CCUG 31568 / BM 3577 / RP62A).